The primary structure comprises 1107 residues: Membrane-associated guanylate kinase, WW and PDZ domain-containing protein 3 (1107 aa).

A PDZ 1 domain is found at 17–102; that stretch reads ECGLSGVGGD…PIRLKTVKPG (86 aa). Residues 110-284 form the Guanylate kinase-like domain; the sequence is RHYLSLQFQK…SMDFRNYLTR (175 aa). 117–124 contacts ATP; that stretch reads FQKGSIDH. Residues 210–277 are disordered; that stretch reads FDTETQRKRT…SYNQTNSSMD (68 aa). The segment covering 220–231 has biased composition (polar residues); sequence TSVSKMQRTDSS. The span at 232–241 shows a compositional bias: acidic residues; sequence LPEEEDEEER. Residues 251 to 261 show a composition bias toward basic and acidic residues; that stretch reads TDHRDRQEPSE. Polar residues predominate over residues 267 to 277; sequence PSYNQTNSSMD. WW domains follow at residues 289–322 and 335–368; these read EPLP…DPRL and GELP…NPVL. The interval 374-398 is disordered; the sequence is KQLNPAPSEGTVHQEPENSQFTRDP. 4 PDZ domains span residues 407–489, 577–653, 727–809, and 853–940; these read HTSL…TLCR, TIPL…LILR, DVFL…TVRR, and DVIL…IAEE. Residues 941 to 975 form a disordered region; that stretch reads EHRGPPSGSNSARQSPAPQHRPMGQTQPTYGTLDR. Positions 947–957 are enriched in polar residues; sequence SGSNSARQSPA. The region spanning 1003-1085 is the PDZ 6 domain; that stretch reads PVELERGPRG…KVLLLLRPGT (83 aa).

It belongs to the MAGUK family.

It localises to the cell membrane. The protein localises to the cell junction. It is found in the tight junction. Its function is as follows. Acts as a scaffolding protein at cell-cell junctions, thereby regulating various cellular and signaling processes. In Xenopus tropicalis (Western clawed frog), this protein is Membrane-associated guanylate kinase, WW and PDZ domain-containing protein 3 (magi3).